Reading from the N-terminus, the 79-residue chain is Putative defensin-like protein 309 (79 aa).

Residues 1-19 form the signal peptide; it reads MKILAFFIFVLLIFSCSSS. 3 disulfides stabilise this stretch: Cys-31–Cys-50, Cys-37–Cys-55, and Cys-41–Cys-57.

It belongs to the DEFL family.

The protein resides in the secreted. This Arabidopsis thaliana (Mouse-ear cress) protein is Putative defensin-like protein 309.